We begin with the raw amino-acid sequence, 203 residues long: Protein Nef (203 aa).

Residues Met-1 to Asp-25 form a disordered region. Residue Gly-2 is the site of N-myristoyl glycine; by host attachment. A Phosphoserine; by host modification is found at Ser-6. The segment at Thr-59–Glu-62 is acidic; interacts with host PACS1 and PACS2; stabilizes the interaction of NEF/MHC-I with host AP1M1; necessary for MHC-I internalization. Residues Pro-66–Pro-75 form an SH3-binding; interaction with Src family tyrosine kinases region. Residues Pro-69–Pro-72 carry the PxxP; stabilizes the interaction of NEF/MHC-I with host AP1M1; necessary for MHC-I internalization motif. Residues Glu-105 to Trp-121 form a mediates dimerization, Nef-PTE1 interaction region. The binding to ATP6V1H stretch occupies residues Val-145 to Val-177. A Dileucine internalization motif; necessary for CD4 internalization motif is present at residues Leu-161–Leu-162. The Diacidic; necessary for CD4 internalization signature appears at Glu-171 to Asp-172.

It belongs to the lentivirus primate group Nef protein family. As to quaternary structure, monomer; cytosolic form. Homodimer; membrane bound form. Interacts with Nef associated p21-activated kinase (PAK2); this interaction activates PAK2. Associates with the Nef-MHC-I-AP1 complex; this complex is required for MHC-I internalization. Interacts (via C-terminus) with host PI3-kinase. Interacts with host PACS1; this interaction seems to be weak. Interacts with host PACS2. Interacts with host LCK and MAPK3; these interactions inhibit the kinase activity of the latter. Interacts with host ATP6V1H; this interaction may play a role in CD4 endocytosis. Associates with the CD4-Nef-AP2 complex; this complex is required for CD4 internalization. Interacts with host AP2 subunit alpha and AP2 subunit sigma2. Interacts with TCR-zeta chain; this interaction up-regulates the Fas ligand (FasL) surface expression. Interacts with host HCK, LYN, and SRC; these interactions activate the Src family kinases. Interacts with MAP3K5; this interaction inhibits the Fas and TNFR-mediated death signals. Interacts with beta-COP and PTE1. Interacts with human RACK1; this increases Nef phosphorylation by PKC. Interacts with TP53; this interaction decreases the half-life of TP53, protecting the infected cell against p53-mediated apoptosis. The virion-associated Nef proteins are cleaved by the viral protease to release the soluble C-terminal core protein. Nef is probably cleaved concomitantly with viral structural proteins on maturation of virus particles. Post-translationally, myristoylated. In terms of processing, phosphorylated on serine residues, probably by host PKCdelta and theta.

It is found in the host cell membrane. The protein localises to the virion. Its subcellular location is the secreted. The protein resides in the host Golgi apparatus membrane. In terms of biological role, factor of infectivity and pathogenicity, required for optimal virus replication. Alters numerous pathways of T-lymphocyte function and down-regulates immunity surface molecules in order to evade host defense and increase viral infectivity. Alters the functionality of other immunity cells, like dendritic cells, monocytes/macrophages and NK cells. In infected CD4(+) T-lymphocytes, down-regulates the surface MHC-I, mature MHC-II, CD4, CD28, CCR5 and CXCR4 molecules. Mediates internalization and degradation of host CD4 through the interaction of with the cytoplasmic tail of CD4, the recruitment of AP-2 (clathrin adapter protein complex 2), internalization through clathrin coated pits, and subsequent transport to endosomes and lysosomes for degradation. Diverts host MHC-I molecules to the trans-Golgi network-associated endosomal compartments by an endocytic pathway to finally target them for degradation. MHC-I down-regulation may involve AP-1 (clathrin adapter protein complex 1) or possibly Src family kinase-ZAP70/Syk-PI3K cascade recruited by PACS2. In consequence infected cells are masked for immune recognition by cytotoxic T-lymphocytes. Decreasing the number of immune receptors also prevents reinfection by more HIV particles (superinfection). Down-regulates host SERINC3 and SERINC5 thereby excluding these proteins from the viral particles. Virion infectivity is drastically higher when SERINC3 or SERINC5 are excluded from the viral envelope, because these host antiviral proteins impair the membrane fusion event necessary for subsequent virion penetration. Its function is as follows. Bypasses host T-cell signaling by inducing a transcriptional program nearly identical to that of anti-CD3 cell activation. Interaction with TCR-zeta chain up-regulates the Fas ligand (FasL). Increasing surface FasL molecules and decreasing surface MHC-I molecules on infected CD4(+) cells send attacking cytotoxic CD8+ T-lymphocytes into apoptosis. Functionally, plays a role in optimizing the host cell environment for viral replication without causing cell death by apoptosis. Protects the infected cells from apoptosis in order to keep them alive until the next virus generation is ready to strike. Inhibits the Fas and TNFR-mediated death signals by blocking MAP3K5/ASK1. Decreases the half-life of TP53, protecting the infected cell against p53-mediated apoptosis. Inhibits the apoptotic signals regulated by the Bcl-2 family proteins through the formation of a Nef/PI3-kinase/PAK2 complex that leads to activation of PAK2 and induces phosphorylation of host BAD. In terms of biological role, extracellular Nef protein targets CD4(+) T-lymphocytes for apoptosis by interacting with CXCR4 surface receptors. The sequence is that of Protein Nef from Human immunodeficiency virus type 1 group M subtype J (isolate SE9280) (HIV-1).